Consider the following 413-residue polypeptide: Serine hydroxymethyltransferase (413 aa).

Residues L117 and 121–123 (GHL) each bind (6S)-5,6,7,8-tetrahydrofolate. K226 is modified (N6-(pyridoxal phosphate)lysine). Residues E239 and 349 to 351 (SPF) contribute to the (6S)-5,6,7,8-tetrahydrofolate site.

It belongs to the SHMT family. As to quaternary structure, homodimer. Requires pyridoxal 5'-phosphate as cofactor.

It is found in the cytoplasm. The enzyme catalyses (6R)-5,10-methylene-5,6,7,8-tetrahydrofolate + glycine + H2O = (6S)-5,6,7,8-tetrahydrofolate + L-serine. The protein operates within one-carbon metabolism; tetrahydrofolate interconversion. Its pathway is amino-acid biosynthesis; glycine biosynthesis; glycine from L-serine: step 1/1. Functionally, catalyzes the reversible interconversion of serine and glycine with tetrahydrofolate (THF) serving as the one-carbon carrier. This reaction serves as the major source of one-carbon groups required for the biosynthesis of purines, thymidylate, methionine, and other important biomolecules. Also exhibits THF-independent aldolase activity toward beta-hydroxyamino acids, producing glycine and aldehydes, via a retro-aldol mechanism. This is Serine hydroxymethyltransferase from Bacillus anthracis (strain A0248).